Reading from the N-terminus, the 101-residue chain is Urease subunit beta (101 aa).

Belongs to the urease beta subunit family. As to quaternary structure, heterotrimer of UreA (gamma), UreB (beta) and UreC (alpha) subunits. Three heterotrimers associate to form the active enzyme.

The protein localises to the cytoplasm. The catalysed reaction is urea + 2 H2O + H(+) = hydrogencarbonate + 2 NH4(+). Its pathway is nitrogen metabolism; urea degradation; CO(2) and NH(3) from urea (urease route): step 1/1. This chain is Urease subunit beta, found in Pseudomonas paraeruginosa (strain DSM 24068 / PA7) (Pseudomonas aeruginosa (strain PA7)).